A 150-amino-acid polypeptide reads, in one-letter code: Small ribosomal subunit protein uS11 (150 aa).

The interval 130–150 is disordered; it reads DVTPIPSDSTRRKSGRRGRRL. The span at 141-150 shows a compositional bias: basic residues; sequence RKSGRRGRRL.

It belongs to the universal ribosomal protein uS11 family.

The sequence is that of Small ribosomal subunit protein uS11 (RPS14) from Lupinus luteus (European yellow lupine).